Here is a 161-residue protein sequence, read N- to C-terminus: Endoribonuclease YbeY (161 aa).

The Zn(2+) site is built by histidine 120, histidine 124, and aspartate 130.

The protein belongs to the endoribonuclease YbeY family. Zn(2+) is required as a cofactor.

The protein resides in the cytoplasm. In terms of biological role, single strand-specific metallo-endoribonuclease involved in late-stage 70S ribosome quality control and in maturation of the 3' terminus of the 16S rRNA. The sequence is that of Endoribonuclease YbeY from Chlamydia trachomatis serovar A (strain ATCC VR-571B / DSM 19440 / HAR-13).